We begin with the raw amino-acid sequence, 620 residues long: MGKILGIDLGTTNSCMAVIEGGKPTVIPNAEGGRTTPSVVGFSKKGDKLVGQVAKRQMIANPGNSVSSIKRHIGEGDYKVNLSGKDYTPQEVSAMILRKLKDDAEAYLGETITQTVITVPAYFNDSQRQATKDAGQIAGLEVLRIINEPTAASLAYGLDKEEGDHKILVYDLGGGTFDVSILELGDGVFEVLSTSGNTHLGGDDFDQRITEFLVEEFKKAEGIDLSNDKAALQRLNDAAEKAKIELSGVASTNVNLPFITADSNGQPKHIDIDITRAQFEKMTEDLVAKTLESMKMALSDAKLTTKDIDRVLLIGGSTRTPAVYNLVKNFIGKDPYKNINPDEAVAVGAAIQAGVLSGEVHDVLLLDVTPLTMGIETLGGVATPLIERNTTIPVKKSQIFSTAADSQPSVEIHILQGERGIASANKTLGRFVLDGIPPAPRGLPQIEVTFDIDSNGILHVNAKDLGTGKEQSISIQKPGGLSDEEIERMVKDAELHAEEDKARKEEVETRNNADSLVNAAENTLKEAGDVATNEQKEQIEAAIADLKTALEGEDLEAIKSKTEALQESVYKVSAAMYEKAQKEASAGAEASEDASGPSSTGSASDDDVVDADYEVVDEDK.

The segment at 579-620 is disordered; sequence KAQKEASAGAEASEDASGPSSTGSASDDDVVDADYEVVDEDK. Positions 583-603 are enriched in low complexity; sequence EASAGAEASEDASGPSSTGSA. Residues 604 to 620 show a composition bias toward acidic residues; sequence SDDDVVDADYEVVDEDK.

Belongs to the heat shock protein 70 family.

Acts as a chaperone. The protein is Chaperone protein DnaK of Methanococcoides burtonii (strain DSM 6242 / NBRC 107633 / OCM 468 / ACE-M).